A 326-amino-acid polypeptide reads, in one-letter code: Ketol-acid reductoisomerase (NADP(+)) (326 aa).

The 181-residue stretch at A2–T182 folds into the KARI N-terminal Rossmann domain. Residues Y25 to Q28, R48, S53, and D83 to Q86 each bind NADP(+). The active site involves H108. G134 serves as a coordination point for NADP(+). The KARI C-terminal knotted domain occupies T183–E325. The Mg(2+) site is built by D191, E195, E227, and E231. S252 is a binding site for substrate.

It belongs to the ketol-acid reductoisomerase family. Mg(2+) serves as cofactor.

The enzyme catalyses (2R)-2,3-dihydroxy-3-methylbutanoate + NADP(+) = (2S)-2-acetolactate + NADPH + H(+). It carries out the reaction (2R,3R)-2,3-dihydroxy-3-methylpentanoate + NADP(+) = (S)-2-ethyl-2-hydroxy-3-oxobutanoate + NADPH + H(+). The protein operates within amino-acid biosynthesis; L-isoleucine biosynthesis; L-isoleucine from 2-oxobutanoate: step 2/4. It participates in amino-acid biosynthesis; L-valine biosynthesis; L-valine from pyruvate: step 2/4. Its function is as follows. Involved in the biosynthesis of branched-chain amino acids (BCAA). Catalyzes an alkyl-migration followed by a ketol-acid reduction of (S)-2-acetolactate (S2AL) to yield (R)-2,3-dihydroxy-isovalerate. In the isomerase reaction, S2AL is rearranged via a Mg-dependent methyl migration to produce 3-hydroxy-3-methyl-2-ketobutyrate (HMKB). In the reductase reaction, this 2-ketoacid undergoes a metal-dependent reduction by NADPH to yield (R)-2,3-dihydroxy-isovalerate. The chain is Ketol-acid reductoisomerase (NADP(+)) from Methanopyrus kandleri (strain AV19 / DSM 6324 / JCM 9639 / NBRC 100938).